A 234-amino-acid chain; its full sequence is Lipoprotein-releasing system ATP-binding protein LolD (234 aa).

One can recognise an ABC transporter domain in the interval 13-233 (IYLHEIKRQY…SLSDGQVVEL (221 aa)). An ATP-binding site is contributed by 49-56 (APSGSGKS).

Belongs to the ABC transporter superfamily. Lipoprotein translocase (TC 3.A.1.125) family. The complex is composed of two ATP-binding proteins (LolD) and two transmembrane proteins (LolC and LolE).

It localises to the cell inner membrane. Part of the ABC transporter complex LolCDE involved in the translocation of mature outer membrane-directed lipoproteins, from the inner membrane to the periplasmic chaperone, LolA. Responsible for the formation of the LolA-lipoprotein complex in an ATP-dependent manner. The protein is Lipoprotein-releasing system ATP-binding protein LolD of Bradyrhizobium diazoefficiens (strain JCM 10833 / BCRC 13528 / IAM 13628 / NBRC 14792 / USDA 110).